Reading from the N-terminus, the 3933-residue chain is Protein DOP1 homolog PFC0245c (3933 aa).

4 helical membrane passes run 70 to 90 (LNPL…SSIF), 98 to 118 (FINN…HCTI), 140 to 160 (IFAY…NNIL), and 163 to 183 (IYSI…WLLL). Disordered regions lie at residues 468–494 (RLNN…KYQG), 543–600 (ININ…NMLH), and 614–656 (KKIN…SSSS). Over residues 470–486 (NNNNNNNNNNNNNNNNN) the composition is skewed to low complexity. A compositionally biased stretch (acidic residues) spans 546 to 561 (NDDDNLNYDDNEDDEY). 2 stretches are compositionally biased toward low complexity: residues 563 to 576 (NYHN…NYFN) and 585 to 597 (ENNN…NNNN). A coiled-coil region spans residues 620 to 651 (GQTNNYDDDEEEEDEEEEDNNNNTSYNNNNNN). A compositionally biased stretch (acidic residues) spans 625 to 639 (YDDDEEEEDEEEEDN). Low complexity predominate over residues 640–656 (NNNTSYNNNNNNSSSSS). 3 consecutive transmembrane segments (helical) span residues 782-802 (MLNL…YTFY), 842-862 (YLYI…MNFL), and 1186-1206 (FYFW…KSLL). The segment covering 1216–1255 (DDTDDDDDDDDDDDDEEEDDDDEDDDDEDDEEEDDEEDLG) has biased composition (acidic residues). Disordered regions lie at residues 1216–1284 (DDTD…MNKK) and 1361–1405 (TNNN…NNFN). A compositionally biased stretch (basic residues) spans 1263 to 1284 (SSKKGKKKKKKSVHKNKLMNKK). Residues 1349–1403 (ELNKMKYMNEDITNNNNNINNNSNNNNNNKNNINNNNNNNNNNNNNNNNLNNLNN) are a coiled coil. Residues 1362–1405 (NNNNNINNNSNNNNNNKNNINNNNNNNNNNNNNNNNLNNLNNFN) are compositionally biased toward low complexity. The next 2 helical transmembrane spans lie at 1462 to 1482 (FIKL…MFCL) and 1997 to 2017 (KNIF…KLIY). Positions 2691–2739 (HRRKMNRQNIRTDSSNNNNNNNINSNNNNNNNNNNNNNNNNNNNNNIYN) are disordered. The span at 2704-2739 (SSNNNNNNNINSNNNNNNNNNNNNNNNNNNNNNIYN) shows a compositional bias: low complexity. 5 helical membrane passes run 2860 to 2880 (INLN…CTLT), 2905 to 2925 (IMSS…HIYV), 3017 to 3037 (YSEI…YHTV), 3200 to 3220 (ILIL…YIII), and 3276 to 3296 (IIIN…SWIF). The segment at 3620–3646 (LKNEKSTRTYNSSLQEGSDYDEEEDEE) is disordered. Over residues 3637–3646 (SDYDEEEDEE) the composition is skewed to acidic residues. Residues 3897 to 3925 (KEETIILLKELNSVENDINDLFLEVDLNE) are a coiled coil.

It belongs to the DOP1 family.

The protein resides in the membrane. May be involved in protein traffic between late Golgi and early endosomes. This chain is Protein DOP1 homolog PFC0245c, found in Plasmodium falciparum (isolate 3D7).